The primary structure comprises 289 residues: Delta-sarcoglycan (289 aa).

Topologically, residues 1 to 35 (MPQEQYTHHRSTMPGSVGPQVYKVGIYGWRKRCLY) are cytoplasmic. The helical; Signal-anchor for type II membrane protein transmembrane segment at 36–56 (FFVLLLMILILVNLAMTIWIL) threads the bilayer. Residues 57 to 289 (KVMNFTIDGM…TCQINTSVCL (233 aa)) lie on the Extracellular side of the membrane. Asn-60 and Asn-108 each carry an N-linked (GlcNAc...) asparagine glycan. 2 cysteine pairs are disulfide-bonded: Cys-263–Cys-288 and Cys-265–Cys-281. An N-linked (GlcNAc...) asparagine glycan is attached at Asn-284.

It belongs to the sarcoglycan beta/delta/gamma/zeta family. In terms of assembly, interacts with FLNC and DAG1. Cross-link to form 2 major subcomplexes: one consisting of SGCB, SGCD and SGCG and the other consisting of SGCB and SGCD. The association between SGCB and SGCG is particularly strong while SGCA is loosely associated with the other sarcoglycans. In terms of processing, glycosylated. Disulfide bonds are present. Most strongly expressed in skeletal and cardiac muscle. Also detected in smooth muscle. Weak expression in brain and lung.

It is found in the cell membrane. It localises to the sarcolemma. The protein resides in the cytoplasm. The protein localises to the cytoskeleton. Functionally, component of the sarcoglycan complex, a subcomplex of the dystrophin-glycoprotein complex which forms a link between the F-actin cytoskeleton and the extracellular matrix. The chain is Delta-sarcoglycan (SGCD) from Homo sapiens (Human).